The sequence spans 483 residues: 6-phosphogluconate dehydrogenase, decarboxylating (483 aa).

Residues 10–15 (GLAVMG) and 33–35 (NRT) contribute to the NADP(+) site. The residue at position 38 (lysine 38) is an N6-acetyllysine. The residue at position 57 (serine 57) is a Phosphoserine. Lysine 59 carries the N6-acetyllysine modification. Residues 75-77 (VKA) and asparagine 103 contribute to the NADP(+) site. Residues asparagine 103 and 129–131 (SGG) each bind substrate. Serine 129 is subject to Phosphoserine. The active-site Proton acceptor is lysine 184. 187–188 (HN) lines the substrate pocket. The Proton donor role is filled by glutamate 191. Tyrosine 192, lysine 261, arginine 288, arginine 447, and histidine 453 together coordinate substrate. NADP(+) is bound at residue 478–481 (SSSY).

The protein belongs to the 6-phosphogluconate dehydrogenase family. Homodimer.

Its subcellular location is the cytoplasm. It carries out the reaction 6-phospho-D-gluconate + NADP(+) = D-ribulose 5-phosphate + CO2 + NADPH. The protein operates within carbohydrate degradation; pentose phosphate pathway; D-ribulose 5-phosphate from D-glucose 6-phosphate (oxidative stage): step 3/3. In terms of biological role, catalyzes the oxidative decarboxylation of 6-phosphogluconate to ribulose 5-phosphate and CO(2), with concomitant reduction of NADP to NADPH. The chain is 6-phosphogluconate dehydrogenase, decarboxylating (Pgd) from Mus musculus (Mouse).